The primary structure comprises 342 residues: Anthranilate phosphoribosyltransferase (342 aa).

5-phospho-alpha-D-ribose 1-diphosphate is bound by residues G84, 87–88 (GD), T92, 94–97 (NITT), 112–120 (KHGNRSVSS), and S124. An anthranilate-binding site is contributed by G84. Position 96 (T96) interacts with Mg(2+). N115 provides a ligand contact to anthranilate. R170 contributes to the anthranilate binding site. Mg(2+) is bound by residues D228 and E229.

It belongs to the anthranilate phosphoribosyltransferase family. As to quaternary structure, homodimer. Mg(2+) serves as cofactor.

It catalyses the reaction N-(5-phospho-beta-D-ribosyl)anthranilate + diphosphate = 5-phospho-alpha-D-ribose 1-diphosphate + anthranilate. The protein operates within amino-acid biosynthesis; L-tryptophan biosynthesis; L-tryptophan from chorismate: step 2/5. Its function is as follows. Catalyzes the transfer of the phosphoribosyl group of 5-phosphorylribose-1-pyrophosphate (PRPP) to anthranilate to yield N-(5'-phosphoribosyl)-anthranilate (PRA). The protein is Anthranilate phosphoribosyltransferase of Corynebacterium efficiens (strain DSM 44549 / YS-314 / AJ 12310 / JCM 11189 / NBRC 100395).